We begin with the raw amino-acid sequence, 235 residues long: DnaA regulatory inactivator Hda (235 aa).

This sequence belongs to the DnaA family. HdA subfamily. In terms of assembly, the active form seems to be an ADP-bound monomer. Forms the RIDA complex (regulatory inactivation of DnaA) of ATP-DnaA, ADP-Hda and the DNA-loaded beta sliding clamp (dnaN).

Its function is as follows. Mediates the interaction of DNA replication initiator protein DnaA with DNA polymerase subunit beta sliding clamp (dnaN). Stimulates hydrolysis of ATP-DnaA to ADP-DnaA, rendering DnaA inactive for reinitiation, a process called regulatory inhibition of DnaA or RIDA. This Yersinia pestis bv. Antiqua (strain Antiqua) protein is DnaA regulatory inactivator Hda.